We begin with the raw amino-acid sequence, 268 residues long: Thiazole synthase (268 aa).

Lysine 96 functions as the Schiff-base intermediate with DXP in the catalytic mechanism. 1-deoxy-D-xylulose 5-phosphate-binding positions include glycine 157, 185–186 (AG), and 207–208 (NT). Positions 238–268 (PMRPREAASPSSPVEGVPFTPTGPRPGRGPQ) are disordered. A compositionally biased stretch (pro residues) spans 258-268 (PTGPRPGRGPQ).

It belongs to the ThiG family. As to quaternary structure, homotetramer. Forms heterodimers with either ThiH or ThiS.

The protein localises to the cytoplasm. The enzyme catalyses [ThiS sulfur-carrier protein]-C-terminal-Gly-aminoethanethioate + 2-iminoacetate + 1-deoxy-D-xylulose 5-phosphate = [ThiS sulfur-carrier protein]-C-terminal Gly-Gly + 2-[(2R,5Z)-2-carboxy-4-methylthiazol-5(2H)-ylidene]ethyl phosphate + 2 H2O + H(+). It participates in cofactor biosynthesis; thiamine diphosphate biosynthesis. Catalyzes the rearrangement of 1-deoxy-D-xylulose 5-phosphate (DXP) to produce the thiazole phosphate moiety of thiamine. Sulfur is provided by the thiocarboxylate moiety of the carrier protein ThiS. In vitro, sulfur can be provided by H(2)S. This chain is Thiazole synthase, found in Thermus thermophilus (strain ATCC BAA-163 / DSM 7039 / HB27).